Here is a 332-residue protein sequence, read N- to C-terminus: L-lactate dehydrogenase (332 aa).

Residues 29–57 (GQVG…CADK) and Arg99 contribute to the NAD(+) site. Residues Arg106, Asn138, and Arg169 each coordinate substrate. Position 138 (Asn138) interacts with NAD(+). The Proton acceptor role is filled by His193. Position 248 (Thr248) interacts with substrate.

This sequence belongs to the LDH/MDH superfamily. LDH family. Homotetramer.

The protein resides in the cytoplasm. It catalyses the reaction (S)-lactate + NAD(+) = pyruvate + NADH + H(+). It participates in fermentation; pyruvate fermentation to lactate; (S)-lactate from pyruvate: step 1/1. This is L-lactate dehydrogenase from Drosophila melanogaster (Fruit fly).